The sequence spans 221 residues: SIN3-HDAC complex-associated factor (221 aa).

A compositionally biased stretch (basic and acidic residues) spans Q112–D121. 2 disordered regions span residues Q112 to G152 and A201 to W221. Low complexity predominate over residues S124 to P135. Residues C136 to G152 show a composition bias toward polar residues.

It belongs to the SINHCAF family. As to quaternary structure, interacts with the Sin3/HDAC corepressor complex at least composed of BRMS1, BRMS1L, ING2, SAP30, SAP30L and HDAC1. Found in a complex composed of at least SINHCAF, SIN3A, HDAC1, SAP30, RBBP4, OGT and TET1. Interacts with SIN3A and OGT.

Its subcellular location is the nucleus. Its function is as follows. Subunit of the Sin3 deacetylase complex (Sin3/HDAC), this subunit is important for the repression of genes encoding components of the TGF-beta signaling pathway. Core component of a SIN3A complex (composed of at least SINHCAF, SIN3A, HDAC1, SAP30, RBBP4, OGT and TET1) present in embryonic stem (ES) cells. Promotes the stability of SIN3A and its presence on chromatin and is essential for maintaining the potential of ES cells to proliferate rapidly, while ensuring a short G1-phase of the cell cycle, thereby preventing premature lineage priming. The polypeptide is SIN3-HDAC complex-associated factor (Homo sapiens (Human)).